A 259-amino-acid polypeptide reads, in one-letter code: Anti-Pycsar protein Apyc1 (259 aa).

Positions 21-233 are beta-lactamase-like; sequence YNNSALVTFT…KQQNKIFLMH (213 aa). Residues His64, His66, Asp68, His69, His154, Asp178, and His233 each contribute to the Zn(2+) site.

The protein belongs to the anti-Pycsar protein Apyc1 family. As to quaternary structure, homodimer. Zn(2+) is required as a cofactor.

The enzyme catalyses 3',5'-cyclic CMP + H2O = CMP + H(+). It catalyses the reaction 3',5'-cyclic UMP + H2O = UMP + H(+). Its function is as follows. Counteracts the host Pycsar antiviral defense system. Phosphodiesterase that enables metal-dependent hydrolysis of host cyclic nucleotide Pycsar defense signals such as cCMP and cUMP. The chain is Anti-Pycsar protein Apyc1 from Bacillus subtilis.